The following is a 297-amino-acid chain: ABSCISIC ACID-INSENSITIVE 5-like protein 2 (297 aa).

Ser-21, Ser-43, and Ser-81 each carry phosphoserine. Disordered stretches follow at residues 100-119 and 138-157; these read IQQN…QPTL and IPGS…SGAG. A Phosphothreonine modification is found at Thr-118. A compositionally biased stretch (gly residues) spans 146 to 157; sequence PVGGGSAGSGAG. The region spanning 225-288 is the bZIP domain; that stretch reads VERRQKRMIK…SVPPPDPKRQ (64 aa). The basic motif stretch occupies residues 227–246; sequence RRQKRMIKNRESAARSRARK. Positions 253–267 are leucine-zipper; sequence LEIKVSRLEEENERL. The interval 272-297 is disordered; sequence EVEKILPSVPPPDPKRQLRRTSSAPF.

This sequence belongs to the bZIP family. ABI5 subfamily. As to quaternary structure, DNA-binding heterodimer with ABI5/DPBF1, DPBF2 or EEL/DPBF4. Interacts with the AFP proteins AFP1, AFP2, AFP3 and AFP4. In terms of tissue distribution, predominantly expressed in seeds.

It localises to the nucleus. In terms of biological role, binds to the embryo specification element and the ABA-responsive element (ABRE) of the Dc3 gene promoter. Could participate in abscisic acid-regulated gene expression during seed development. The polypeptide is ABSCISIC ACID-INSENSITIVE 5-like protein 2 (DPBF3) (Arabidopsis thaliana (Mouse-ear cress)).